Reading from the N-terminus, the 179-residue chain is dCTP deaminase (179 aa).

DCTP contacts are provided by residues 101-106 (RSTLAR) and D117. Catalysis depends on E127, which acts as the Proton donor/acceptor. A dCTP-binding site is contributed by Q165.

The protein belongs to the dCTP deaminase family. Homotrimer.

The catalysed reaction is dCTP + H2O + H(+) = dUTP + NH4(+). It participates in pyrimidine metabolism; dUMP biosynthesis; dUMP from dCTP (dUTP route): step 1/2. In terms of biological role, catalyzes the deamination of dCTP to dUTP. In Caldivirga maquilingensis (strain ATCC 700844 / DSM 13496 / JCM 10307 / IC-167), this protein is dCTP deaminase.